We begin with the raw amino-acid sequence, 148 residues long: Large ribosomal subunit protein uL15 (148 aa).

Positions 1–30 (MPSRLRKTRKLRGHVSHGHGRIGKHRKHPG) are enriched in basic residues. The interval 1-38 (MPSRLRKTRKLRGHVSHGHGRIGKHRKHPGGRGNAGGL) is disordered. Position 39 is a (3S)-3-hydroxyhistidine (H39). N6-acetyllysine occurs at positions 47 and 55. S68 carries the phosphoserine modification. N6-acetyllysine is present on K110.

The protein belongs to the universal ribosomal protein uL15 family. Post-translationally, hydroxylated on His-39 by MINA.

The sequence is that of Large ribosomal subunit protein uL15 (RPL27A) from Pan troglodytes (Chimpanzee).